The primary structure comprises 164 residues: Respiratory growth induced protein 2 (164 aa).

It belongs to the RGI1 family.

The protein localises to the cytoplasm. Its function is as follows. Involved in the control of energetic metabolism and significantly contribute to cell fitness, especially under respiratory growth conditions. The sequence is that of Respiratory growth induced protein 2 (RGI2) from Candida glabrata (strain ATCC 2001 / BCRC 20586 / JCM 3761 / NBRC 0622 / NRRL Y-65 / CBS 138) (Yeast).